The sequence spans 237 residues: Purine nucleoside phosphorylase DeoD-type (237 aa).

A purine D-ribonucleoside is bound at residue histidine 4. Residues glycine 20, arginine 24, arginine 43, and 87 to 90 (RVGT) each bind phosphate. A purine D-ribonucleoside is bound by residues 179 to 181 (EME) and 203 to 204 (SD). Aspartate 204 acts as the Proton donor in catalysis.

It belongs to the PNP/UDP phosphorylase family. Homohexamer; trimer of homodimers.

The catalysed reaction is a purine D-ribonucleoside + phosphate = a purine nucleobase + alpha-D-ribose 1-phosphate. It carries out the reaction a purine 2'-deoxy-D-ribonucleoside + phosphate = a purine nucleobase + 2-deoxy-alpha-D-ribose 1-phosphate. In terms of biological role, catalyzes the reversible phosphorolytic breakdown of the N-glycosidic bond in the beta-(deoxy)ribonucleoside molecules, with the formation of the corresponding free purine bases and pentose-1-phosphate. The chain is Purine nucleoside phosphorylase DeoD-type from Clostridium beijerinckii (strain ATCC 51743 / NCIMB 8052) (Clostridium acetobutylicum).